A 100-amino-acid polypeptide reads, in one-letter code: Small ribosomal subunit protein uS14c (100 aa).

Belongs to the universal ribosomal protein uS14 family. In terms of assembly, part of the 30S ribosomal subunit.

It localises to the plastid. Its subcellular location is the chloroplast. Binds 16S rRNA, required for the assembly of 30S particles. The polypeptide is Small ribosomal subunit protein uS14c (Euglena gracilis).